The following is a 1707-amino-acid chain: Histone-lysine N-methyltransferase SETD1A (1707 aa).

An interaction with WDR82 region spans residues 60–89 (LQDPRCHVRSKNRDFSLPVPKFKLDEFYIG). In terms of domain architecture, RRM spans 84–172 (DEFYIGQIPL…NIIHAQLDIK (89 aa)). Disordered stretches follow at residues 194 to 308 (PTGG…YQDA), 331 to 363 (TAAT…RSSD), 381 to 486 (SYPP…AQHS), 506 to 655 (LASD…PPPH), 834 to 854 (AKPF…EKTK), 891 to 1251 (PSFK…GTEV), and 1264 to 1293 (ARRG…RPLL). A compositionally biased stretch (polar residues) spans 239 to 277 (NGTPCSQDTSFSSSRQDTPSSFGQFTPQSSQGTPYTSRG). Low complexity-rich tracts occupy residues 278–295 (STPY…TSTS) and 331–357 (TAAT…SSSS). The segment covering 430–440 (SEAPPPEPPEP) has biased composition (pro residues). 2 positions are modified to phosphoserine: serine 459 and serine 464. A compositionally biased stretch (low complexity) spans 459 to 473 (SPRPASPARSGSPAP). Residues 474–486 (ETTNESVPFAQHS) show a composition bias toward polar residues. Phosphoserine is present on residues serine 508 and serine 565. A compositionally biased stretch (polar residues) spans 568 to 578 (ANGQNQASPCS). Composition is skewed to pro residues over residues 593 to 617 (SPPP…PPPY) and 624 to 655 (GYPP…PPPH). Basic and acidic residues predominate over residues 844-854 (QAKEEDKEKTK). Serine 915 is subject to Phosphoserine. Acidic residues-rich tracts occupy residues 918-927 (AEEDEDDPEQ) and 976-992 (KDEE…DREE). Over residues 993–1002 (AVDTTKKETE) the composition is skewed to basic and acidic residues. Acidic residues predominate over residues 1003-1012 (VSDGEDEESD). Positions 1032-1060 (DSESSSSSSSSSSSSSSSSSSSSSSSSES) are enriched in low complexity. Residues 1077-1094 (ASPPPREVPVPTPAPVEV) are compositionally biased toward pro residues. Serine 1103 is subject to Phosphoserine. A compositionally biased stretch (pro residues) spans 1127–1145 (PSAPLRPPEPPAGPPAPAP). Acidic residues predominate over residues 1275 to 1284 (EDSEATETSD). The HCFC1-binding motif (HBM) motif lies at 1299–1303 (EHNYA). Disordered regions lie at residues 1307–1417 (KPTP…AYEP) and 1472–1499 (NLTT…SEGY). The span at 1308–1323 (PTPPAPALRPPEPVPA) shows a compositional bias: pro residues. Positions 1360 to 1377 (EGEEEGEEEGEEEEEESS) are enriched in acidic residues. Basic residues predominate over residues 1390 to 1403 (RRRSLRSHARRRRP). A compositionally biased stretch (pro residues) spans 1404 to 1414 (PPPPPPPPPRA). The interval 1415-1450 (YEPRSEFEQMTILYDIWNSGLDSEDMSYLRLTYERL) is interaction with CFP1. The segment at 1450–1537 (LLQQTSGADW…GTNRVLSERR (88 aa)) is interaction with ASH2L, RBBP5 and WDR5. The WDR5 interaction motif (WIN) signature appears at 1492–1497 (GSARSE). The short motif at 1537–1542 (RSEQRR) is the RxxxRR motif element. The SET domain maps to 1568–1685 (KKLRFGRSRI…VDEEITYDYK (118 aa)). Tyrosine 1684 serves as a coordination point for S-adenosyl-L-methionine. The 17-residue stretch at 1691 to 1707 (NKIPCLCGTESCRGSLN) folds into the Post-SET domain.

Belongs to the class V-like SAM-binding methyltransferase superfamily. Component of the SET1A/COMPASS complex composed of the catalytic subunit SETD1A, WDR5, WDR82, RBBP5, ASH2L/ASH2, CXXC1/CFP1, HCFC1 and DPY30 homotrimer. Forms a core complex with the evolutionary conserved subcomplex WRAD composed of WDR5, RBBP5, ASH2L/ASH2 and DPY30 subunits; WRAD differentially stimulates the methyltransferase activity. Interacts with BOD1L1 (via COMPASS-Shg1 domain) at replication forks. Interacts with HCFC1. Interacts with ASH2/ASH2L. Interacts with CXXC1/CFP1. Interacts with RBBP5. Interacts (via N-terminal region) with WDR82; the interaction is direct. Interacts (via the RRM domain) with hyperphosphorylated C-terminal domain (CTD) of RNA polymerase II large subunit (POLR2A) only in the presence of WDR82. Binds specifically to CTD heptad repeats phosphorylated on 'Ser-5' of each heptad. Interacts with ZNF335. Interacts with SUPT6H. Interacts with NAP1L1. Interacts (via WIN motif) with WDR5.

Its subcellular location is the nucleus speckle. It localises to the chromosome. The protein resides in the cytoplasm. It carries out the reaction L-lysyl(4)-[histone H3] + S-adenosyl-L-methionine = N(6)-methyl-L-lysyl(4)-[histone H3] + S-adenosyl-L-homocysteine + H(+). The enzyme catalyses N(6)-methyl-L-lysyl(4)-[histone H3] + S-adenosyl-L-methionine = N(6),N(6)-dimethyl-L-lysyl(4)-[histone H3] + S-adenosyl-L-homocysteine + H(+). The catalysed reaction is N(6),N(6)-dimethyl-L-lysyl(4)-[histone H3] + S-adenosyl-L-methionine = N(6),N(6),N(6)-trimethyl-L-lysyl(4)-[histone H3] + S-adenosyl-L-homocysteine + H(+). Histone methyltransferase that catalyzes methyl group transfer from S-adenosyl-L-methionine to the epsilon-amino group of 'Lys-4' of histone H3 (H3K4) via a non-processive mechanism. Part of chromatin remodeling machinery, forms H3K4me1, H3K4me2 and H3K4me3 methylation marks at active chromatin sites where transcription and DNA repair take place. Responsible for H3K4me3 enriched promoters and transcriptional programming of inner mass stem cells and neuron progenitors during embryogenesis. Required for H3K4me1 mark at stalled replication forks. Mediates FANCD2-dependent nucleosome remodeling and RAD51 nucleofilaments stabilization at reversed forks, protecting them from nucleolytic degradation. Does not methylate 'Lys-4' of histone H3 if the neighboring 'Lys-9' residue is already methylated. Binds RNAs involved in RNA processing and the DNA damage response. This Homo sapiens (Human) protein is Histone-lysine N-methyltransferase SETD1A (SETD1A).